The chain runs to 134 residues: D-ribose pyranase (134 aa).

H20 acts as the Proton donor in catalysis. Substrate contacts are provided by residues D28, H101, and 123-125; that span reads YCN.

Belongs to the RbsD / FucU family. RbsD subfamily. Homodecamer.

It is found in the cytoplasm. The catalysed reaction is beta-D-ribopyranose = beta-D-ribofuranose. Its pathway is carbohydrate metabolism; D-ribose degradation; D-ribose 5-phosphate from beta-D-ribopyranose: step 1/2. Functionally, catalyzes the interconversion of beta-pyran and beta-furan forms of D-ribose. This Pseudomonas fluorescens (strain SBW25) protein is D-ribose pyranase.